The primary structure comprises 176 residues: uncharacterized protein (176 aa).

Residues 1–22 (MKYNNIIFLGLCLGLTTYSALS) form the signal peptide. A disulfide bridge links Cys38 with Cys78.

It belongs to the fimbrial protein family.

The protein resides in the fimbrium. This is an uncharacterized protein from Escherichia coli (strain K12).